Reading from the N-terminus, the 105-residue chain is Large ribosomal subunit protein uL24 (105 aa).

The protein belongs to the universal ribosomal protein uL24 family. As to quaternary structure, part of the 50S ribosomal subunit.

Functionally, one of two assembly initiator proteins, it binds directly to the 5'-end of the 23S rRNA, where it nucleates assembly of the 50S subunit. In terms of biological role, one of the proteins that surrounds the polypeptide exit tunnel on the outside of the subunit. The chain is Large ribosomal subunit protein uL24 from Xylella fastidiosa (strain M12).